Here is a 235-residue protein sequence, read N- to C-terminus: Interleukin-34 (235 aa).

The signal sequence occupies residues 1-20 (MPWGLAWLYCLGILLDVALG). N-linked (GlcNAc...) asparagine glycosylation is present at Asn100.

The protein belongs to the IL-34 family. In terms of assembly, homodimer. Interacts with CSF1R.

It localises to the secreted. Its function is as follows. Cytokine that promotes the proliferation, survival and differentiation of monocytes and macrophages. Promotes the release of pro-inflammatory chemokines, and thereby plays an important role in innate immunity and in inflammatory processes. Plays an important role in the regulation of osteoclast proliferation and differentiation, and in the regulation of bone resorption. Signaling via CSF1R and its downstream effectors stimulates phosphorylation of MAPK1/ERK2 AND MAPK3/ERK1. The protein is Interleukin-34 (Il34) of Mus musculus (Mouse).